A 492-amino-acid chain; its full sequence is 3-octaprenyl-4-hydroxybenzoate carboxy-lyase (492 aa).

Mn(2+) is bound at residue Asn177. Prenylated FMN-binding positions include 180–182 (IYR), 194–196 (RWL), and 199–200 (RG). Glu243 serves as a coordination point for Mn(2+). Asp292 serves as the catalytic Proton donor.

Belongs to the UbiD family. As to quaternary structure, homohexamer. The cofactor is prenylated FMN. Requires Mn(2+) as cofactor.

The protein localises to the cell membrane. It catalyses the reaction a 4-hydroxy-3-(all-trans-polyprenyl)benzoate + H(+) = a 2-(all-trans-polyprenyl)phenol + CO2. It functions in the pathway cofactor biosynthesis; ubiquinone biosynthesis. In terms of biological role, catalyzes the decarboxylation of 3-octaprenyl-4-hydroxy benzoate to 2-octaprenylphenol, an intermediate step in ubiquinone biosynthesis. This chain is 3-octaprenyl-4-hydroxybenzoate carboxy-lyase, found in Neisseria meningitidis serogroup C / serotype 2a (strain ATCC 700532 / DSM 15464 / FAM18).